A 159-amino-acid polypeptide reads, in one-letter code: ATP synthase subunit b (159 aa).

The helical transmembrane segment at 8-28 (ILATIINFIILILILKHFFWD) threads the bilayer.

The protein belongs to the ATPase B chain family. As to quaternary structure, F-type ATPases have 2 components, F(1) - the catalytic core - and F(0) - the membrane proton channel. F(1) has five subunits: alpha(3), beta(3), gamma(1), delta(1), epsilon(1). F(0) has three main subunits: a(1), b(2) and c(10-14). The alpha and beta chains form an alternating ring which encloses part of the gamma chain. F(1) is attached to F(0) by a central stalk formed by the gamma and epsilon chains, while a peripheral stalk is formed by the delta and b chains.

It localises to the cell membrane. In terms of biological role, f(1)F(0) ATP synthase produces ATP from ADP in the presence of a proton or sodium gradient. F-type ATPases consist of two structural domains, F(1) containing the extramembraneous catalytic core and F(0) containing the membrane proton channel, linked together by a central stalk and a peripheral stalk. During catalysis, ATP synthesis in the catalytic domain of F(1) is coupled via a rotary mechanism of the central stalk subunits to proton translocation. Its function is as follows. Component of the F(0) channel, it forms part of the peripheral stalk, linking F(1) to F(0). This Clostridium perfringens (strain ATCC 13124 / DSM 756 / JCM 1290 / NCIMB 6125 / NCTC 8237 / Type A) protein is ATP synthase subunit b.